Here is a 226-residue protein sequence, read N- to C-terminus: Large ribosomal subunit protein uL4 (226 aa).

Residues Gly47–Arg74 are disordered.

The protein belongs to the universal ribosomal protein uL4 family. In terms of assembly, part of the 50S ribosomal subunit.

Functionally, one of the primary rRNA binding proteins, this protein initially binds near the 5'-end of the 23S rRNA. It is important during the early stages of 50S assembly. It makes multiple contacts with different domains of the 23S rRNA in the assembled 50S subunit and ribosome. In terms of biological role, forms part of the polypeptide exit tunnel. This chain is Large ribosomal subunit protein uL4, found in Kosmotoga olearia (strain ATCC BAA-1733 / DSM 21960 / TBF 19.5.1).